A 399-amino-acid polypeptide reads, in one-letter code: Replication-associated protein ORF4 (399 aa).

Catalysis depends on O-(5'-phospho-DNA)-tyrosine intermediate residues Tyr251 and Tyr255.

The protein belongs to the microviridae Rep protein family.

The catalysed reaction is ATP + (deoxyribonucleotide)n-3'-hydroxyl + 5'-phospho-(deoxyribonucleotide)m = (deoxyribonucleotide)n+m + AMP + diphosphate.. In terms of biological role, plays an essential role in viral DNA replication. Binds the origin of replication and cleaves the dsDNA replicative form I (RFI) and becomes covalently bound to it via phosphotyrosine bond, generating the dsDNA replicative form II (RFII). In turn, viral DNA replication initiates at the 3'-OH of the cleavage site. After one round of rolling circle synthesis, protein ORF4 is linked to the newly synthesized ssDNA and joins the ends of the displaced strand to generate a circular single-stranded molecule ready to be packed into a virion. In Chlamydia psittaci (Chlamydophila psittaci), this protein is Replication-associated protein ORF4.